Reading from the N-terminus, the 285-residue chain is G patch domain-containing protein 11 (285 aa).

The stretch at 51–87 (MLRQIREARRKEEKQQEANLKNRQKSLKEEEQERRDI) forms a coiled coil. Positions 59-84 (RRKEEKQQEANLKNRQKSLKEEEQER) are disordered. Positions 95-141 (CENKGFALLQKMGYKSGQALGKSGGGIVEPIPLNIKTGKSGIGHEAS) constitute a G-patch domain. S141 is modified (phosphoserine). At K149 the chain carries N6-acetyllysine. The span at 218 to 235 (EETEEDEEEKEQDEDEYK) shows a compositional bias: acidic residues. Residues 218–237 (EETEEDEEEKEQDEDEYKSE) are disordered.

Belongs to the GPATCH11 family.

The protein localises to the chromosome. Its subcellular location is the centromere. It localises to the kinetochore. In Homo sapiens (Human), this protein is G patch domain-containing protein 11 (GPATCH11).